Consider the following 476-residue polypeptide: Abscisic acid 8'-hydroxylase CYP707A1 (476 aa).

Residues 5–25 form a helical membrane-spanning segment; the sequence is FEIFLYISMFVLGYLSYYFCF. Cysteine 422 serves as a coordination point for heme.

The protein belongs to the cytochrome P450 family. It depends on heme as a cofactor. As to expression, expressed in ovaries (specifically in ovules and placenta), sepals, petals and pedicels.

It is found in the membrane. It catalyses the reaction 2-cis-(+)-abscisate + reduced [NADPH--hemoprotein reductase] + O2 = (+)-8'-hydroxyabscisate + oxidized [NADPH--hemoprotein reductase] + H2O + H(+). The protein operates within plant hormone degradation; abscisic acid degradation. Involved in the oxidative degradation of abscisic acid, especially in pollinated ovaries. The sequence is that of Abscisic acid 8'-hydroxylase CYP707A1 from Solanum lycopersicum (Tomato).